Here is a 70-residue protein sequence, read N- to C-terminus: MNLIAAAIAIGLGALGAGIGNGLIVSRTVEGIARQPEAGKELRTLMFMGIALVEALPIIAVVIAFLAFFG.

2 helical membrane-spanning segments follow: residues 4–24 (IAAAIAIGLGALGAGIGNGLI) and 49–69 (GIALVEALPIIAVVIAFLAFF).

It belongs to the ATPase C chain family. In terms of assembly, F-type ATPases have 2 components, F(1) - the catalytic core - and F(0) - the membrane proton channel. F(1) has five subunits: alpha(3), beta(3), gamma(1), delta(1), epsilon(1). F(0) has three main subunits: a(1), b(2) and c(10-14). The alpha and beta chains form an alternating ring which encloses part of the gamma chain. F(1) is attached to F(0) by a central stalk formed by the gamma and epsilon chains, while a peripheral stalk is formed by the delta and b chains. The F(1)F(0) complex interacts with SpoIIIJ and YqjG; YqgA is found in the same complex.

The protein localises to the cell membrane. Its function is as follows. F(1)F(0) ATP synthase produces ATP from ADP in the presence of a proton or sodium gradient. F-type ATPases consist of two structural domains, F(1) containing the extramembraneous catalytic core and F(0) containing the membrane proton channel, linked together by a central stalk and a peripheral stalk. During catalysis, ATP synthesis in the catalytic domain of F(1) is coupled via a rotary mechanism of the central stalk subunits to proton translocation. In terms of biological role, key component of the F(0) channel; it plays a direct role in translocation across the membrane. A homomeric c-ring of between 10-14 subunits forms the central stalk rotor element with the F(1) delta and epsilon subunits. The chain is ATP synthase subunit c from Bacillus subtilis (strain 168).